A 723-amino-acid chain; its full sequence is Transmembrane channel-like protein 7 (723 aa).

Disordered stretches follow at residues 1-28 (MSESSGSALQPGRPSRQPAVHPENLSLD) and 51-71 (RRRTTVHSRDKQSGTLLKPTD). At 1–168 (MSESSGSALQ…GIQSYFSFLR (168 aa)) the chain is on the extracellular side. Residue Asn24 is glycosylated (N-linked (GlcNAc...) asparagine). A glycan (N-linked (GlcNAc...) asparagine) is linked at Asn84. Ser89 bears the Phosphoserine mark. The N-linked (GlcNAc...) asparagine glycan is linked to Asn96. The chain crosses the membrane as a helical span at residues 169–189 (FLVLLNLVIFLIIFMLVLLPV). The Cytoplasmic segment spans residues 190–219 (LLTKYKITNSSFVLIPFKDMDKQCTVYPVS). A helical membrane pass occupies residues 220-240 (SSGLIYFYSYIIDLLSGTGFL). The Extracellular portion of the chain corresponds to 241-263 (EETSLFYGHYTIDGVKFQNFTYD). Asn259 carries an N-linked (GlcNAc...) asparagine glycan. Residues 264–284 (LPLAYLLSTIASLALSLLWIV) traverse the membrane as a helical segment. Residues 285-362 (KRSVEGFKIN…EETIRIYSLR (78 aa)) lie on the Cytoplasmic side of the membrane. A helical membrane pass occupies residues 363–383 (LFLNCIVLAVLGACFYAIYVA). The Extracellular segment spans residues 384 to 404 (TVFSQEHMKKEIDKMVFGENL). Residues 405–425 (FILYLPSIVITLANFITPMIF) form a helical membrane-spanning segment. Residues 426-494 (AKIIRYEDYS…PCWETQVGQE (69 aa)) lie on the Cytoplasmic side of the membrane. Residues 495–515 (MYKLMIFDFIIILAVTLFVDF) form a helical membrane-spanning segment. Topologically, residues 516-555 (PRKLLVTYCSSCKLIQCWGQQEFAIPDNVLGIVYGQTICW) are extracellular. Residues 556–576 (IGAFFSPLLPAIATLKFIIIF) form a helical membrane-spanning segment. Residues 577 to 601 (YVKEWSLLYTCRPSPRPFRASNSNF) lie on the Cytoplasmic side of the membrane. The chain crosses the membrane as a helical span at residues 602–622 (FFLLVLLIGLCLAIIPLTISI). Over 623 to 665 (SRIPSSKACGPFTNFNTTWEVIPKTVSTFPSSLQSFIHGVTSE) the chain is Extracellular. The N-linked (GlcNAc...) asparagine glycan is linked to Asn638. A helical membrane pass occupies residues 666–686 (AFAVPFFMIICLIMFYFIALA). At 687-723 (GAHKRVVIQLREQLSLESRDKCYLIQKLTEAQRDMRN) the chain is on the cytoplasmic side.

It belongs to the TMC family. In terms of assembly, interacts with PIEZO2; the interaction inhibits PIEZO2-conducted mechanically activated currents.

Its subcellular location is the membrane. Its function is as follows. Acts as an inhibitory modulator of PIEZO2 mechanosensitive channel in dorsal root ganglion (DRG) neurons through physical interactions or interference with the interaction between PIEZO2 and the cytoskeleton. The chain is Transmembrane channel-like protein 7 from Homo sapiens (Human).